Here is a 302-residue protein sequence, read N- to C-terminus: uncharacterized protein (302 aa).

Positions Gln19–Asn90 constitute an S4 RNA-binding domain. Residue Asp138 is part of the active site. Positions Lys182–Gly205 are disordered.

It belongs to the pseudouridine synthase RluA family.

It catalyses the reaction a uridine in RNA = a pseudouridine in RNA. This is an uncharacterized protein from Bacillus subtilis (strain 168).